The sequence spans 203 residues: Holliday junction branch migration complex subunit RuvA (203 aa).

The tract at residues 1–63 (MIGKLSGRVD…EDHINLYGFL (63 aa)) is domain I. A domain II region spans residues 64–142 (SLEEKSFFNL…KISSSSAAIK (79 aa)). The tract at residues 143-149 (DSLNIKG) is flexible linker. The domain III stretch occupies residues 150–203 (ITPVASSEVIKALINMGFSRFEAQNAVQEIITKNPEISIDELIRTALKNRNSNF).

Belongs to the RuvA family. Homotetramer. Forms an RuvA(8)-RuvB(12)-Holliday junction (HJ) complex. HJ DNA is sandwiched between 2 RuvA tetramers; dsDNA enters through RuvA and exits via RuvB. An RuvB hexamer assembles on each DNA strand where it exits the tetramer. Each RuvB hexamer is contacted by two RuvA subunits (via domain III) on 2 adjacent RuvB subunits; this complex drives branch migration. In the full resolvosome a probable DNA-RuvA(4)-RuvB(12)-RuvC(2) complex forms which resolves the HJ.

Its subcellular location is the cytoplasm. Its function is as follows. The RuvA-RuvB-RuvC complex processes Holliday junction (HJ) DNA during genetic recombination and DNA repair, while the RuvA-RuvB complex plays an important role in the rescue of blocked DNA replication forks via replication fork reversal (RFR). RuvA specifically binds to HJ cruciform DNA, conferring on it an open structure. The RuvB hexamer acts as an ATP-dependent pump, pulling dsDNA into and through the RuvAB complex. HJ branch migration allows RuvC to scan DNA until it finds its consensus sequence, where it cleaves and resolves the cruciform DNA. The polypeptide is Holliday junction branch migration complex subunit RuvA (Rickettsia bellii (strain OSU 85-389)).